We begin with the raw amino-acid sequence, 280 residues long: Pantothenate synthetase (280 aa).

Methionine 26–histidine 33 is an ATP binding site. Histidine 33 (proton donor) is an active-site residue. Glutamine 57 serves as a coordination point for (R)-pantoate. Beta-alanine is bound at residue glutamine 57. Residue glycine 147–aspartate 150 coordinates ATP. (R)-pantoate is bound at residue glutamine 153. Leucine 184–arginine 187 serves as a coordination point for ATP.

It belongs to the pantothenate synthetase family. In terms of assembly, homodimer.

Its subcellular location is the cytoplasm. The enzyme catalyses (R)-pantoate + beta-alanine + ATP = (R)-pantothenate + AMP + diphosphate + H(+). The protein operates within cofactor biosynthesis; (R)-pantothenate biosynthesis; (R)-pantothenate from (R)-pantoate and beta-alanine: step 1/1. In terms of biological role, catalyzes the condensation of pantoate with beta-alanine in an ATP-dependent reaction via a pantoyl-adenylate intermediate. The chain is Pantothenate synthetase from Verminephrobacter eiseniae (strain EF01-2).